The following is a 594-amino-acid chain: Probable glucose transporter rco-3 (594 aa).

Over 1-13 (MAIFAMGWQKPDN) the chain is Cytoplasmic. A helical membrane pass occupies residues 14-34 (VAGSSAPAIMVGLFVATGGLL). The Extracellular segment spans residues 35-73 (LGYDTGTINGILAMKSFKDHFSTGYIDGNGQPGIYPKES). Residues 74 to 94 (ALIVAMLSAGTAIGALLAAPL) form a helical membrane-spanning segment. The Cytoplasmic portion of the chain corresponds to 95–103 (GDHYGRRRS). Residues 104–124 (LIGAIGIFVIGAILQVCAYNI) traverse the membrane as a helical segment. Asp-125 is a topological domain (extracellular). A helical membrane pass occupies residues 126 to 146 (LLVAGRTVAGVGIGIVSVLVP). Residues 147-159 (LYQSEMAPKWIRG) lie on the Cytoplasmic side of the membrane. Residues 160 to 180 (TLVCTYQLSITMGLLAAAVVN) traverse the membrane as a helical segment. Over 181 to 193 (ILTYKLKTAAAYR) the chain is Extracellular. Residues 194 to 214 (VPIGLQLTWACVLALGLTVLP) traverse the membrane as a helical segment. The Cytoplasmic portion of the chain corresponds to 215-293 (ETPRYLIKRG…TGCCLQMLQQ (79 aa)). Residues 294–314 (LTGVNFIMYYGTTFFNNAGVG) traverse the membrane as a helical segment. Topologically, residues 315–318 (NPFK) are extracellular. A helical membrane pass occupies residues 319–339 (ISLIMQVINTASTIPGLFVVE). The Cytoplasmic segment spans residues 340 to 345 (SWGRRR). A helical membrane pass occupies residues 346-366 (LLMVGAIGMAICQLLIAAFAT). The Extracellular portion of the chain corresponds to 367-378 (ASGSNNLSAQNK). Asn-372 carries N-linked (GlcNAc...) asparagine glycosylation. Residues 379–403 (VLITFVAIYIFFFAASWGPVVWVVT) traverse the membrane as a helical segment. Residues 404–415 (SEIYPLKVRAKS) are Cytoplasmic-facing. A helical transmembrane segment spans residues 416–436 (MSITTASNWFLNFGIAYGTPY). The Extracellular segment spans residues 437 to 454 (MQTNSAASDESSIDLGSK). Residues 455-475 (VFFVWGAFCIVAVGFVWCMVY) traverse the membrane as a helical segment. Topologically, residues 476-594 (ETSKISLEQI…ASLGNIDLSY (119 aa)) are cytoplasmic. Positions 512 to 594 (DLGFSDGGIP…ASLGNIDLSY (83 aa)) are disordered. Over residues 524-576 (QQLQQQPQQPQQQQQQHHQQQQHQLQVDLQQSQSRTSNSSTSQTDTGGSNNTG) the composition is skewed to low complexity.

This sequence belongs to the major facilitator superfamily. Sugar transporter (TC 2.A.1.1) family.

It localises to the membrane. Its function is as follows. Probable glucose transporter. Involved in sugar transport, carbon catabolite repression, and initiation of conidiophore development. The chain is Probable glucose transporter rco-3 (rco-3) from Neurospora crassa (strain ATCC 24698 / 74-OR23-1A / CBS 708.71 / DSM 1257 / FGSC 987).